A 765-amino-acid chain; its full sequence is DNA ligase (765 aa).

A disordered region spans residues 1–34 (MAGDDEDRAVPAAEGAPPPSALPPVSGLDVKAAE). NAD(+)-binding positions include 61–65 (DAEYD), 110–111 (SL), and E144. K146 acts as the N6-AMP-lysine intermediate in catalysis. NAD(+) is bound by residues R167, E204, K317, and K341. Residues C446, C449, C464, and C470 each contribute to the Zn(2+) site. Positions 687–765 (ATDSAIAGKT…EDEWLAIAQG (79 aa)) constitute a BRCT domain.

It belongs to the NAD-dependent DNA ligase family. LigA subfamily. The cofactor is Mg(2+). Requires Mn(2+) as cofactor.

It catalyses the reaction NAD(+) + (deoxyribonucleotide)n-3'-hydroxyl + 5'-phospho-(deoxyribonucleotide)m = (deoxyribonucleotide)n+m + AMP + beta-nicotinamide D-nucleotide.. DNA ligase that catalyzes the formation of phosphodiester linkages between 5'-phosphoryl and 3'-hydroxyl groups in double-stranded DNA using NAD as a coenzyme and as the energy source for the reaction. It is essential for DNA replication and repair of damaged DNA. This is DNA ligase from Paracoccus denitrificans (strain Pd 1222).